Here is a 204-residue protein sequence, read N- to C-terminus: Arginine exporter protein ArgO (204 aa).

6 helical membrane-spanning segments follow: residues M1–P21, L37–G57, L67–A87, I111–V131, T154–L174, and V179–A199.

This sequence belongs to the LysE/ArgO transporter (TC 2.A.75) family.

Its subcellular location is the cell inner membrane. It catalyses the reaction L-arginine(in) = L-arginine(out). Its function is as follows. Involved in the export of arginine. Important to control the intracellular level of arginine and the correct balance between arginine and lysine. The protein is Arginine exporter protein ArgO of Pectobacterium atrosepticum (strain SCRI 1043 / ATCC BAA-672) (Erwinia carotovora subsp. atroseptica).